We begin with the raw amino-acid sequence, 204 residues long: Somatotropin (204 aa).

Positions 1–17 (MDKVLFLLFVLSLGVSS) are cleaved as a signal peptide. At glutamine 18 the chain carries Pyrrolidone carboxylic acid. Histidine 36 is a Zn(2+) binding site. A disulfide bond links cysteine 69 and cysteine 177. Position 186 (glutamate 186) interacts with Zn(2+). A disulfide bridge connects residues cysteine 194 and cysteine 202.

It belongs to the somatotropin/prolactin family.

The protein resides in the secreted. Functionally, growth hormone plays an important role in growth control and is involved in the regulation of several anabolic processes. Implicated as an osmoregulatory substance important for seawater adaptation. The chain is Somatotropin (gh) from Trichopodus trichopterus (Three spot gourami).